A 132-amino-acid chain; its full sequence is Large ribosomal subunit protein bL20c (132 aa).

Belongs to the bacterial ribosomal protein bL20 family.

It localises to the plastid. It is found in the chloroplast. Binds directly to 23S ribosomal RNA and is necessary for the in vitro assembly process of the 50S ribosomal subunit. It is not involved in the protein synthesizing functions of that subunit. The sequence is that of Large ribosomal subunit protein bL20c from Coffea arabica (Arabian coffee).